A 324-amino-acid polypeptide reads, in one-letter code: Glucokinase (324 aa).

An ATP-binding site is contributed by 6 to 11 (IDIGGT).

Belongs to the bacterial glucokinase family.

Its subcellular location is the cytoplasm. It carries out the reaction D-glucose + ATP = D-glucose 6-phosphate + ADP + H(+). This Zymomonas mobilis subsp. mobilis (strain ATCC 31821 / ZM4 / CP4) protein is Glucokinase.